The primary structure comprises 575 residues: Arginine--tRNA ligase (575 aa).

The short motif at 131–141 is the 'HIGH' region element; sequence ANPTGPLHVGH.

It belongs to the class-I aminoacyl-tRNA synthetase family. Monomer.

The protein localises to the cytoplasm. It catalyses the reaction tRNA(Arg) + L-arginine + ATP = L-arginyl-tRNA(Arg) + AMP + diphosphate. The polypeptide is Arginine--tRNA ligase (Jannaschia sp. (strain CCS1)).